A 399-amino-acid polypeptide reads, in one-letter code: Putative 8-amino-7-oxononanoate synthase (399 aa).

Arginine 23 provides a ligand contact to substrate. Pyridoxal 5'-phosphate is bound at residue 110–111 (GY). Histidine 135 contacts substrate. Pyridoxal 5'-phosphate is bound by residues serine 183, 208–211 (DEAH), and 239–242 (TLSK). Lysine 242 is modified (N6-(pyridoxal phosphate)lysine). Threonine 364 serves as a coordination point for substrate.

This sequence belongs to the class-II pyridoxal-phosphate-dependent aminotransferase family. BioF subfamily. As to quaternary structure, homodimer. The cofactor is pyridoxal 5'-phosphate.

The catalysed reaction is 6-carboxyhexanoyl-[ACP] + L-alanine + H(+) = (8S)-8-amino-7-oxononanoate + holo-[ACP] + CO2. It functions in the pathway cofactor biosynthesis; biotin biosynthesis. Catalyzes the decarboxylative condensation of pimeloyl-[acyl-carrier protein] and L-alanine to produce 8-amino-7-oxononanoate (AON), [acyl-carrier protein], and carbon dioxide. This chain is Putative 8-amino-7-oxononanoate synthase (bioF), found in Cyanothece sp. (strain PCC 7425 / ATCC 29141).